Reading from the N-terminus, the 122-residue chain is Small ribosomal subunit protein uS12c (122 aa).

This sequence belongs to the universal ribosomal protein uS12 family. Part of the 30S ribosomal subunit.

The protein resides in the plastid. It is found in the chloroplast. Its function is as follows. With S4 and S5 plays an important role in translational accuracy. Located at the interface of the 30S and 50S subunits. The protein is Small ribosomal subunit protein uS12c (rps12) of Cyanidioschyzon merolae (strain NIES-3377 / 10D) (Unicellular red alga).